Here is a 401-residue protein sequence, read N- to C-terminus: UPF0283 membrane protein SO_1811 (401 aa).

Residues 1–22 (MSVELLPHSTEPHANGADKSVS) form a disordered region. 3 helical membrane-spanning segments follow: residues 99–119 (LARL…VLGL), 129–149 (LFSF…VGVI), and 239–259 (ESAV…IILW).

The protein belongs to the UPF0283 family.

It localises to the cell inner membrane. In Shewanella oneidensis (strain ATCC 700550 / JCM 31522 / CIP 106686 / LMG 19005 / NCIMB 14063 / MR-1), this protein is UPF0283 membrane protein SO_1811.